The sequence spans 148 residues: Large ribosomal subunit protein bL9 (148 aa).

It belongs to the bacterial ribosomal protein bL9 family.

Binds to the 23S rRNA. The protein is Large ribosomal subunit protein bL9 of Marinobacter nauticus (strain ATCC 700491 / DSM 11845 / VT8) (Marinobacter aquaeolei).